Consider the following 368-residue polypeptide: High affinity transport system protein p37 (368 aa).

Residues 1–25 (MLFKKFTWVIPSLFLTIISTSLLIS) form the signal peptide. Cys26 is lipidated: N-palmitoyl cysteine. The S-diacylglycerol cysteine moiety is linked to residue Cys26.

It localises to the cell membrane. Its function is as follows. P37 is part of a high-affinity transport system. This Mycoplasma genitalium (strain ATCC 33530 / DSM 19775 / NCTC 10195 / G37) (Mycoplasmoides genitalium) protein is High affinity transport system protein p37 (p37).